Consider the following 86-residue polypeptide: UPF0297 protein LCABL_08470 (86 aa).

The protein belongs to the UPF0297 family.

This Lacticaseibacillus casei (strain BL23) (Lactobacillus casei) protein is UPF0297 protein LCABL_08470.